Here is a 310-residue protein sequence, read N- to C-terminus: Upstream stimulatory factor 1 (310 aa).

Positions 1–17 are enriched in polar residues; the sequence is MKGQQKTAETEEGTVQI. 2 disordered regions span residues 1–26 and 171–209; these read MKGQ…ATGE and QGGS…EVER. Over residues 190–209 the composition is skewed to basic and acidic residues; the sequence is EAPRTTRDEKRRAQHNEVER. The bHLH domain maps to 199–254; it reads KRRAQHNEVERRRRDKINNWIVQLSKIIPDCSMESTKSGQSKGGILSKACDYIQEL. The segment at 271 to 292 is leucine-zipper; that stretch reads LQLDNDVLRQQVEDLKNKNLLL. Residue K306 forms a Glycyl lysine isopeptide (Lys-Gly) (interchain with G-Cter in SUMO2) linkage.

In terms of assembly, efficient DNA binding requires dimerization with another bHLH protein. Binds DNA as a homodimer or a heterodimer (USF1/USF2).

Its subcellular location is the nucleus. In terms of biological role, transcription factor that binds to a symmetrical DNA sequence (E-boxes) (5'-CACGTG-3') that is found in a variety of viral and cellular promoters. In Bos taurus (Bovine), this protein is Upstream stimulatory factor 1 (USF1).